The following is a 141-amino-acid chain: Large ribosomal subunit protein uL11 (141 aa).

Belongs to the universal ribosomal protein uL11 family. Part of the ribosomal stalk of the 50S ribosomal subunit. Interacts with L10 and the large rRNA to form the base of the stalk. L10 forms an elongated spine to which L12 dimers bind in a sequential fashion forming a multimeric L10(L12)X complex. One or more lysine residues are methylated.

Forms part of the ribosomal stalk which helps the ribosome interact with GTP-bound translation factors. This is Large ribosomal subunit protein uL11 from Streptococcus mutans serotype c (strain ATCC 700610 / UA159).